A 329-amino-acid chain; its full sequence is rRNA 2'-O-methyltransferase fibrillarin (329 aa).

The segment at 1 to 85 (MAFGAPRGRG…GGARGGARGG (85 aa)) is disordered. The segment covering 13–84 (RGGFGGRGGS…RGGARGGARG (72 aa)) has biased composition (gly residues). S-adenosyl-L-methionine contacts are provided by residues 181 to 182 (TS), 200 to 201 (EF), 225 to 226 (DA), and 245 to 248 (DVAQ).

Belongs to the methyltransferase superfamily. Fibrillarin family. As to quaternary structure, component of box C/D small nucleolar ribonucleoprotein (snoRNP) particles that contain SNU13, NOP1, SIK1/NOP56 and NOP58, plus a guide RNA. In terms of processing, by homology to other fibrillarins, some or all of the N-terminal domain arginines are modified to asymmetric dimethylarginine (DMA).

Its subcellular location is the nucleus. The protein resides in the nucleolus. It catalyses the reaction L-glutaminyl-[histone H2A] + S-adenosyl-L-methionine = N(5)-methyl-L-glutaminyl-[histone H2A] + S-adenosyl-L-homocysteine + H(+). Functionally, S-adenosyl-L-methionine-dependent methyltransferase that has the ability to methylate both RNAs and proteins. Involved in pre-rRNA processing. Utilizes the methyl donor S-adenosyl-L-methionine to catalyze the site-specific 2'-hydroxyl methylation of ribose moieties in pre-ribosomal RNA. Site specificity is provided by a guide RNA that base pairs with the substrate. Methylation occurs at a characteristic distance from the sequence involved in base pairing with the guide RNA. Also acts as a protein methyltransferase by mediating methylation of 'Gln-105' of histone H2A (H2AQ105me), a modification that impairs binding of the FACT complex and is specifically present at 35S ribosomal DNA locus. The protein is rRNA 2'-O-methyltransferase fibrillarin (NOP1) of Debaryomyces hansenii (strain ATCC 36239 / CBS 767 / BCRC 21394 / JCM 1990 / NBRC 0083 / IGC 2968) (Yeast).